The following is a 292-amino-acid chain: Cbb3-type cytochrome c oxidase subunit CcoP (292 aa).

A run of 2 helical transmembrane segments spans residues 11-31 (FGLIAALVILVLTIYESSSLI) and 62-82 (VGWIASFMCTIVWAFWYFFFG). Cytochrome c domains follow at residues 116 to 195 (ELVD…MAEI) and 205 to 288 (QLID…QSLK). Heme c is bound by residues C129, C132, H133, M174, C219, C222, H223, and M264.

The protein belongs to the CcoP / FixP family. As to quaternary structure, component of the cbb3-type cytochrome c oxidase at least composed of CcoN, CcoO, CcoQ and CcoP. Heme c is required as a cofactor.

Its subcellular location is the cell inner membrane. Its pathway is energy metabolism; oxidative phosphorylation. Its function is as follows. C-type cytochrome. Part of the cbb3-type cytochrome c oxidase complex. CcoP subunit is required for transferring electrons from donor cytochrome c via its heme groups to CcoO subunit. From there, electrons are shuttled to the catalytic binuclear center of CcoN subunit where oxygen reduction takes place. The complex also functions as a proton pump. In Helicobacter pylori (strain 52), this protein is Cbb3-type cytochrome c oxidase subunit CcoP.